The following is a 119-amino-acid chain: UPF0342 protein Athe_0692 (119 aa).

Belongs to the UPF0342 family.

This is UPF0342 protein Athe_0692 from Caldicellulosiruptor bescii (strain ATCC BAA-1888 / DSM 6725 / KCTC 15123 / Z-1320) (Anaerocellum thermophilum).